The chain runs to 185 residues: Peptidyl-tRNA hydrolase (185 aa).

Tyr-14 lines the tRNA pocket. Catalysis depends on His-19, which acts as the Proton acceptor. TRNA-binding residues include Phe-64, Asn-66, and Asn-112.

The protein belongs to the PTH family. As to quaternary structure, monomer.

The protein resides in the cytoplasm. It carries out the reaction an N-acyl-L-alpha-aminoacyl-tRNA + H2O = an N-acyl-L-amino acid + a tRNA + H(+). Its function is as follows. Hydrolyzes ribosome-free peptidyl-tRNAs (with 1 or more amino acids incorporated), which drop off the ribosome during protein synthesis, or as a result of ribosome stalling. Catalyzes the release of premature peptidyl moieties from peptidyl-tRNA molecules trapped in stalled 50S ribosomal subunits, and thus maintains levels of free tRNAs and 50S ribosomes. The polypeptide is Peptidyl-tRNA hydrolase (Halalkalibacterium halodurans (strain ATCC BAA-125 / DSM 18197 / FERM 7344 / JCM 9153 / C-125) (Bacillus halodurans)).